A 295-amino-acid chain; its full sequence is GTP cyclohydrolase FolE2 (295 aa).

This sequence belongs to the GTP cyclohydrolase IV family.

The catalysed reaction is GTP + H2O = 7,8-dihydroneopterin 3'-triphosphate + formate + H(+). It participates in cofactor biosynthesis; 7,8-dihydroneopterin triphosphate biosynthesis; 7,8-dihydroneopterin triphosphate from GTP: step 1/1. Converts GTP to 7,8-dihydroneopterin triphosphate. This chain is GTP cyclohydrolase FolE2, found in Pseudomonas putida (strain W619).